We begin with the raw amino-acid sequence, 359 residues long: Mannose-1-phosphate guanylyltransferase (359 aa).

Belongs to the transferase hexapeptide repeat family.

It carries out the reaction alpha-D-mannose 1-phosphate + GTP + H(+) = GDP-alpha-D-mannose + diphosphate. The protein operates within cell wall biogenesis. Its pathway is nucleotide-sugar biosynthesis; GDP-alpha-D-mannose biosynthesis; GDP-alpha-D-mannose from alpha-D-mannose 1-phosphate (GTP route): step 1/1. Its function is as follows. Catalyzes the formation of GDP-mannose from D-mannose-1-phosphate and GTP. Plays an important role in the synthesis of different glycoconjugates which are responsible for cell wall structure, virulence and immunomodulatory activity of M.tuberculosis. In Mycobacterium tuberculosis (strain ATCC 25618 / H37Rv), this protein is Mannose-1-phosphate guanylyltransferase.